The primary structure comprises 222 residues: Pleckstrin homology domain-containing family B member 2 (222 aa).

In terms of domain architecture, PH spans 2–109 (AFVKSGWLLR…WKFTLQDSRT (108 aa)). Position 20 (K20) interacts with a 1,2-diacyl-sn-glycero-3-phospho-L-serine.

It is found in the recycling endosome membrane. Its function is as follows. Involved in retrograde transport of recycling endosomes. The sequence is that of Pleckstrin homology domain-containing family B member 2 (PLEKHB2) from Homo sapiens (Human).